The sequence spans 128 residues: Large ribosomal subunit protein uL22 (128 aa).

It belongs to the universal ribosomal protein uL22 family. In terms of assembly, part of the 50S ribosomal subunit.

In terms of biological role, this protein binds specifically to 23S rRNA; its binding is stimulated by other ribosomal proteins, e.g. L4, L17, and L20. It is important during the early stages of 50S assembly. It makes multiple contacts with different domains of the 23S rRNA in the assembled 50S subunit and ribosome. Functionally, the globular domain of the protein is located near the polypeptide exit tunnel on the outside of the subunit, while an extended beta-hairpin is found that lines the wall of the exit tunnel in the center of the 70S ribosome. The chain is Large ribosomal subunit protein uL22 from Rhodopseudomonas palustris (strain BisB18).